The primary structure comprises 640 residues: ESX-3 secretion system protein EccA3 (640 aa).

An ATP-binding site is contributed by G393 to T400.

This sequence belongs to the CbxX/CfxQ family. Part of the ESX-3 / type VII secretion system (T7SS), which is composed of cytosolic and membrane components.

The protein resides in the cytoplasm. In terms of biological role, part of an ESX-3 / type VII specialized secretion system (T7SS), which exports several proteins. EccA3 exhibits ATPase activity and may provide energy for the export of ESX-3 substrates. The sequence is that of ESX-3 secretion system protein EccA3 from Mycobacterium leprae (strain TN).